A 106-amino-acid chain; its full sequence is Ribosomal processing cysteine protease Prp (106 aa).

The Proton donor role is filled by H22. C34 (nucleophile) is an active-site residue.

It belongs to the Prp family. As to quaternary structure, homodimer. A mutant protein unable to cleave bL27 copurifies with its substrate.

Not inhibited by short peptide analogs; a 6-mer inhibits only 20% while a 13-mer inhibits 63%. Inhibited by Ac-KLNLQFF-CH(2) which binds covalantly to Cys-34. Inhibited by mersalyl acid (C13H18HgNO6). In terms of biological role, an essential cysteine protease that cleaves the N-terminal 9 amino acids from ribosomal protein bL27. Also acts as an N-terminal protease on the major capsid and scaffold assembly proteins of bacteriophage 80alpha. Cleavage of the N-terminus of bL27 (and thus this enzyme) is essential for growth; it cannot be replaced by a 'pre-cleaved' or non-cleavable form of bL27. Might serve a chaperone function during ribosome assembly. This chain is Ribosomal processing cysteine protease Prp, found in Staphylococcus aureus (strain NCTC 8325 / PS 47).